We begin with the raw amino-acid sequence, 289 residues long: E3 ubiquitin-protein ligase MARCHF5 (289 aa).

The RING-CH-type zinc-finger motif lies at 4–73 (VDEPPEKHCW…PQCGTEYRIV (70 aa)). C12, C15, C31, C33, H41, C44, C63, and C66 together coordinate Zn(2+). The next 4 helical transmembrane spans lie at 97–117 (FAAA…YGAV), 137–157 (PLFL…GKMI), 202–222 (LSVS…NLVG), and 236–256 (TILG…YFKQ).

Its subcellular location is the mitochondrion outer membrane. It localises to the endoplasmic reticulum membrane. The enzyme catalyses S-ubiquitinyl-[E2 ubiquitin-conjugating enzyme]-L-cysteine + [acceptor protein]-L-lysine = [E2 ubiquitin-conjugating enzyme]-L-cysteine + N(6)-ubiquitinyl-[acceptor protein]-L-lysine.. It functions in the pathway protein modification; protein ubiquitination. Functionally, mitochondrial E3 ubiquitin-protein ligase that plays a crucial role in the control of mitochondrial morphology by acting as a positive regulator of mitochondrial fission. May play a role in the prevention of cell senescence acting as a regulator of mitochondrial quality control. The protein is E3 ubiquitin-protein ligase MARCHF5 (marchf5) of Danio rerio (Zebrafish).